The primary structure comprises 195 residues: Rubrerythrin-1 (195 aa).

The 148-residue stretch at 3–150 (SLKGTKTAEN…ALLKNIEENK (148 aa)) folds into the Ferritin-like diiron domain. Glu-20, Glu-53, Glu-98, Glu-101, Glu-132, His-135, Cys-162, Cys-165, Cys-178, and Cys-181 together coordinate Fe(3+). The region spanning 157–191 (VKFWKCIKCGYIFEGKTAPKVCPACLHPQAYFEIL) is the Rubredoxin-like domain.

Homodimer. Fe(3+) is required as a cofactor.

It catalyses the reaction H2O2 + NADH + H(+) = NAD(+) + 2 H2O. With respect to regulation, rubredoxin (Rd) increases the NADH consumption rate by serving as an intermediary electron-transfer shuttle between NROR and RubY. In terms of biological role, functions as the terminal component of an NADH peroxidase (NADH:H(2)O(2) oxidoreductase) when using NADH:rubredoxin oxidoreductase (NROR) as the electron transport intermediary from NADH to RubY. The polypeptide is Rubrerythrin-1 (rbr1) (Clostridium acetobutylicum (strain ATCC 824 / DSM 792 / JCM 1419 / IAM 19013 / LMG 5710 / NBRC 13948 / NRRL B-527 / VKM B-1787 / 2291 / W)).